The following is a 234-amino-acid chain: HTH-type transcriptional repressor FabR (234 aa).

The HTH tetR-type domain occupies 29–89 (KTRRSLVEAA…TMVDESGLML (61 aa)). The segment at residues 52–71 (SLREVAREAGIAPTSFYRHF) is a DNA-binding region (H-T-H motif).

In terms of assembly, homodimer.

The protein localises to the cytoplasm. With respect to regulation, has been suggested to require either an unsaturated acyl carrier protein or unsaturated acyl-CoA (but not their saturated equivalents) for DNA-binding. Another group suggests that unsaturated thioesters are not essential but act instead to enhance DNA-binding. Its function is as follows. Binds the promoter region of at least fabA and fabB, but probably not yqfA. Represses the transcription of fabA and fabB, involved in unsaturated fatty acid (UFA) biosynthesis. By controlling UFA production, FabR directly influences the physical properties of the membrane bilayer. This Escherichia coli (strain K12) protein is HTH-type transcriptional repressor FabR.